Reading from the N-terminus, the 389-residue chain is Succinate--CoA ligase [ADP-forming] subunit beta (389 aa).

In terms of domain architecture, ATP-grasp spans 9-236; that stretch reads KELFAKHEVP…KDATDPLELK (228 aa). Residues Lys45, 52 to 54, Ser94, and Glu99 contribute to the ATP site; that span reads GRG. Asn191 and Asp205 together coordinate Mg(2+). Substrate-binding positions include Asn256 and 318 to 320; that span reads GIT.

It belongs to the succinate/malate CoA ligase beta subunit family. Heterotetramer of two alpha and two beta subunits. Mg(2+) serves as cofactor.

It catalyses the reaction succinate + ATP + CoA = succinyl-CoA + ADP + phosphate. The enzyme catalyses GTP + succinate + CoA = succinyl-CoA + GDP + phosphate. The protein operates within carbohydrate metabolism; tricarboxylic acid cycle; succinate from succinyl-CoA (ligase route): step 1/1. In terms of biological role, succinyl-CoA synthetase functions in the citric acid cycle (TCA), coupling the hydrolysis of succinyl-CoA to the synthesis of either ATP or GTP and thus represents the only step of substrate-level phosphorylation in the TCA. The beta subunit provides nucleotide specificity of the enzyme and binds the substrate succinate, while the binding sites for coenzyme A and phosphate are found in the alpha subunit. This Rhodococcus jostii (strain RHA1) protein is Succinate--CoA ligase [ADP-forming] subunit beta.